The following is a 391-amino-acid chain: NADH-quinone oxidoreductase subunit D (391 aa).

This sequence belongs to the complex I 49 kDa subunit family. NDH-1 is composed of 14 different subunits. Subunits NuoB, C, D, E, F, and G constitute the peripheral sector of the complex.

The protein resides in the cell inner membrane. The catalysed reaction is a quinone + NADH + 5 H(+)(in) = a quinol + NAD(+) + 4 H(+)(out). Functionally, NDH-1 shuttles electrons from NADH, via FMN and iron-sulfur (Fe-S) centers, to quinones in the respiratory chain. The immediate electron acceptor for the enzyme in this species is believed to be ubiquinone. Couples the redox reaction to proton translocation (for every two electrons transferred, four hydrogen ions are translocated across the cytoplasmic membrane), and thus conserves the redox energy in a proton gradient. The chain is NADH-quinone oxidoreductase subunit D from Pelagibacter ubique (strain HTCC1062).